The chain runs to 267 residues: Staphylococcal secretory antigen ssaA2 (267 aa).

The first 27 residues, 1–27 (MKKIATATIATAGFATIAIASGNQAHA), serve as a signal peptide directing secretion. Tandem repeats lie at residues 83–85 (YNN), 86–88 (YNN), 89–91 (YNN), 95–97 (YNN), 101–103 (YNN), 104–106 (YSN), and 113–115 (YNN). The 7 X 3 AA repeats of Y-[NS]-N stretch occupies residues 83 to 115 (YNNYNNYNNGYSYNNYSRYNNYSNNNQSYNYNN). Residues 146–267 (MAPSSNGRSI…SQAAGYNFIH (122 aa)) form the Peptidase C51 domain.

It is found in the secreted. Not known; immunogenic protein. This chain is Staphylococcal secretory antigen ssaA2 (ssaA2), found in Staphylococcus aureus (strain NCTC 8325 / PS 47).